A 451-amino-acid chain; its full sequence is MVVKVKQKIPLKIKRMGINGEGIGFYQKTLVFVPGALKGENIFCQITAVKRNFAEAKLLTVNKASKNRVKPACSVYETCGGCQIMHLAYPKQLDFKDDVIRQALKKFKPTGYEQFEIRPTLGMKKPDHYRAKLQFQLRSFGGTVKAGLFSQGSHRLVPIDNCLVQDQLTQDIINKITQLVDKYKLPIYNERKIAGIRTIMVRKAQASDQVQIIVVSSKEVRLANFIGELTKAFPQVKTVALNSNRSKSSEIYGDETEILWGQEAIHEEVLDYGFALSPRAFYQLNPQQTEVLYGEVVKALDVGSKDHIIDAYCGVGSIGFAFAGKVKSVRGMDIIPEAIEDAQKNAKAMGFDNAYYEAGKAEDIIPKWYKQGYRADAIIVDPPRTGLDDKLLKTILHYQPKQMVYVSCNTSTLARDLVQLTKVYDVHYIQSVDMFPHTARTEAVVKLQKRV.

The 59-residue stretch at 2-60 folds into the TRAM domain; that stretch reads VVKVKQKIPLKIKRMGINGEGIGFYQKTLVFVPGALKGENIFCQITAVKRNFAEAKLLT. 4 residues coordinate [4Fe-4S] cluster: C73, C79, C82, and C162. Residues Q283, Y312, D333, and D381 each coordinate S-adenosyl-L-methionine. C408 acts as the Nucleophile in catalysis.

It belongs to the class I-like SAM-binding methyltransferase superfamily. RNA M5U methyltransferase family.

This is an uncharacterized protein from Streptococcus pyogenes serotype M3 (strain ATCC BAA-595 / MGAS315).